The sequence spans 63 residues: Prokaryotic ubiquitin-like protein Pup (63 aa).

A compositionally biased stretch (basic and acidic residues) spans 1 to 11 (MAQEQTRRGGG). The tract at residues 1–36 (MAQEQTRRGGGGDDDEFTSSTSVGQERREKLTEETD) is disordered. The segment at 20 to 57 (STSVGQERREKLTEETDDLLDEIDDVLEENAEDFVRAY) is ARC ATPase binding. Residues 23–51 (VGQERREKLTEETDDLLDEIDDVLEENAE) are a coiled coil. Q63 bears the Deamidated glutamine mark. An Isoglutamyl lysine isopeptide (Gln-Lys) (interchain with K-? in acceptor proteins) cross-link involves residue Q63.

It belongs to the prokaryotic ubiquitin-like protein family. Strongly interacts with the proteasome-associated ATPase ARC through a hydrophobic interface; the interacting region of Pup lies in its C-terminal half. There is one Pup binding site per ARC hexamer ring. Post-translationally, is modified by deamidation of its C-terminal glutamine to glutamate by the deamidase Dop, a prerequisite to the subsequent pupylation process.

The protein operates within protein degradation; proteasomal Pup-dependent pathway. In terms of biological role, protein modifier that is covalently attached to lysine residues of substrate proteins, thereby targeting them for proteasomal degradation. The tagging system is termed pupylation. The sequence is that of Prokaryotic ubiquitin-like protein Pup from Mycobacterium leprae (strain Br4923).